The following is a 496-amino-acid chain: E3 ubiquitin-protein ligase CBL-C (496 aa).

The segment at 7–144 (PRGWQRGEPR…SALFPAGKYC (138 aa)) is 4H. A Cbl-PTB domain is found at 7 to 320 (PRGWQRGEPR…GKKHNPDLTE (314 aa)). An EF-hand-like region spans residues 145 to 217 (GHLYQLTKGS…FEFDVFTRLF (73 aa)). Residues aspartate 198, threonine 200, asparagine 202, and glutamate 209 each contribute to the Ca(2+) site. The segment at 218–320 (QPWPTLLRNW…GKKHNPDLTE (103 aa)) is SH2-like. 4-O-phospho-L-tyrosine is bound at residue arginine 263. The tract at residues 321–349 (LCRVEPYQRIQVSEEQLLLYQAMNSTFQL) is linker. Residue tyrosine 340 is modified to Phosphotyrosine; by SRC. Residues 350–389 (CKICAERDKDVRIEPCGHLLCSCCLAAWQDSDSQTCPFCR) form an RING-type zinc finger. The interval 350–494 (CKICAERDKD…RPRAREEATE (145 aa)) is interaction with RET. The disordered stretch occupies residues 432 to 453 (PVIPSAPSLLPEDQFPQGPQDK).

Interacts with Ubiquitin-conjugating enzyme E2 UBE2D2 and UBE2D3. Isoform 1 interacts with EGFR (tyrosine phosphorylated). Interacts with the SH3 domain proteins LYN and CRK. Interacts (via RING-type zinc finger) with TGFB1I1 (via LIM zinc-binding domain 2); the interaction is direct and enhances the E3 activity. Interacts directly with RET (inactive) and CD2AP; dissociates from RET upon RET activation by GDNF which also increases the interaction with CD2AP suggesting dissociation as CBLC:CD2AP complex. Interacts with SRC; the interaction is enhanced when SRC is phosphorylated at 'Tyr-419'. Post-translationally, phosphorylated on tyrosines by EGFR. In terms of processing, phosphorylated on multiple tyrosine residues by SRC. Isoform 1, but not isoform 2, is phosphorylated on tyrosines by EGFR. Autoubiquitinated, when phosphorylated at Tyr-340. As to expression, widely expressed in tissues, where the expression is restricted to epithelial cells (at protein level).

It catalyses the reaction S-ubiquitinyl-[E2 ubiquitin-conjugating enzyme]-L-cysteine + [acceptor protein]-L-lysine = [E2 ubiquitin-conjugating enzyme]-L-cysteine + N(6)-ubiquitinyl-[acceptor protein]-L-lysine.. Its activity is regulated as follows. Phosphorylation at Tyr-340 is necessary and sufficient for the activation of E3 activity. Functionally, acts as an E3 ubiquitin-protein ligase, which accepts ubiquitin from specific E2 ubiquitin-conjugating enzymes, and then transfers it to substrates promoting their degradation by the proteasome. Functionally coupled with the E2 ubiquitin-protein ligases UB2D1, UB2D2 and UB2D3. Regulator of EGFR mediated signal transduction; upon EGF activation, ubiquitinates EGFR. Isoform 1, but not isoform 2, inhibits EGF stimulated MAPK1 activation. Promotes ubiquitination of SRC phosphorylated at 'Tyr-424', has the highest ubiquitin ligase activity among CBL family proteins. In collaboration with CD2AP may act as regulatory checkpoint for Ret signaling by modulating the rate of RET degradation after ligand activation; CD2AP converts it from an inhibitor to a promoter of RET degradation; the function limits the potency of GDNF on neuronal survival. In Mus musculus (Mouse), this protein is E3 ubiquitin-protein ligase CBL-C (Cblc).